The sequence spans 378 residues: Chaperone protein DnaJ 2 (378 aa).

In terms of domain architecture, J spans 4-68 (DYYAVLGVRR…QKKQVYDLGG (65 aa)). A CR-type zinc finger spans residues 130–212 (GTTKDIQVET…CAGDGRVRSR (83 aa)). Positions 143, 146, 160, 163, 186, 189, 200, and 203 each coordinate Zn(2+). CXXCXGXG motif repeat units follow at residues 143 to 150 (CTTCSGEG), 160 to 167 (CDMCRGRG), 186 to 193 (CPQCQGFG), and 200 to 207 (CPECAGDG). Residues 351 to 378 (RGEERPTGQFQPGQQGLFSRLKDAFNGR) form a disordered region. Residues 358-367 (GQFQPGQQGL) show a composition bias toward polar residues.

This sequence belongs to the DnaJ family. In terms of assembly, homodimer. Requires Zn(2+) as cofactor.

It localises to the cytoplasm. Its function is as follows. Participates actively in the response to hyperosmotic and heat shock by preventing the aggregation of stress-denatured proteins and by disaggregating proteins, also in an autonomous, DnaK-independent fashion. Unfolded proteins bind initially to DnaJ; upon interaction with the DnaJ-bound protein, DnaK hydrolyzes its bound ATP, resulting in the formation of a stable complex. GrpE releases ADP from DnaK; ATP binding to DnaK triggers the release of the substrate protein, thus completing the reaction cycle. Several rounds of ATP-dependent interactions between DnaJ, DnaK and GrpE are required for fully efficient folding. Also involved, together with DnaK and GrpE, in the DNA replication of plasmids through activation of initiation proteins. In Streptomyces avermitilis (strain ATCC 31267 / DSM 46492 / JCM 5070 / NBRC 14893 / NCIMB 12804 / NRRL 8165 / MA-4680), this protein is Chaperone protein DnaJ 2.